The following is a 140-amino-acid chain: Phosphoribosyl-AMP cyclohydrolase (140 aa).

Position 78 (aspartate 78) interacts with Mg(2+). Cysteine 79 serves as a coordination point for Zn(2+). Mg(2+) contacts are provided by aspartate 80 and aspartate 82. 2 residues coordinate Zn(2+): cysteine 96 and cysteine 103.

This sequence belongs to the PRA-CH family. As to quaternary structure, homodimer. Mg(2+) is required as a cofactor. The cofactor is Zn(2+).

The protein localises to the cytoplasm. The catalysed reaction is 1-(5-phospho-beta-D-ribosyl)-5'-AMP + H2O = 1-(5-phospho-beta-D-ribosyl)-5-[(5-phospho-beta-D-ribosylamino)methylideneamino]imidazole-4-carboxamide. Its pathway is amino-acid biosynthesis; L-histidine biosynthesis; L-histidine from 5-phospho-alpha-D-ribose 1-diphosphate: step 3/9. Catalyzes the hydrolysis of the adenine ring of phosphoribosyl-AMP. The chain is Phosphoribosyl-AMP cyclohydrolase from Ralstonia nicotianae (strain ATCC BAA-1114 / GMI1000) (Ralstonia solanacearum).